The following is a 423-amino-acid chain: Histidine--tRNA ligase (423 aa).

It belongs to the class-II aminoacyl-tRNA synthetase family. Homodimer.

It is found in the cytoplasm. It carries out the reaction tRNA(His) + L-histidine + ATP = L-histidyl-tRNA(His) + AMP + diphosphate + H(+). This is Histidine--tRNA ligase from Halorhodospira halophila (strain DSM 244 / SL1) (Ectothiorhodospira halophila (strain DSM 244 / SL1)).